The following is a 1430-amino-acid chain: ABC transporter eupT (1430 aa).

The tract at residues 1–26 is disordered; sequence MAPAIDSTVNDLQPNTPNPEKALSSQ. The ABC transporter 1 domain maps to 112–368; that stretch reads LALPAMIRQL…FVNLGFECPA (257 aa). An N-linked (GlcNAc...) asparagine glycan is attached at Asn-292. Transmembrane regions (helical) follow at residues 476-496, 511-531, 557-577, 586-606, and 620-640; these read WPAV…SSLF, VVLF…VMTL, VLVD…VFYF, GNFF…SGVF, and MVPA…VVPV. Asn-684 carries N-linked (GlcNAc...) asparagine glycosylation. Residues 707-727 form a helical membrane-spanning segment; sequence VGIIIAMVIFNYLMYFIASEY. The 244-residue stretch at 789 to 1032 folds into the ABC transporter 2 domain; the sequence is FHWNNVCYDL…TLIDYFERNG (244 aa). Residue 825-832 participates in ATP binding; the sequence is GVSGAGKT. A glycan (N-linked (GlcNAc...) asparagine) is linked at Asn-1019. Transmembrane regions (helical) follow at residues 1133 to 1153, 1213 to 1233, 1249 to 1269, 1278 to 1298, 1305 to 1325, and 1400 to 1420; these read ITLC…APLS, LPWS…PIGF, LMWL…HMCI, GGNI…VLAS, FWIF…VLST, and FGIL…LYWI.

The protein belongs to the ABC transporter superfamily. ABCG family. PDR (TC 3.A.1.205) subfamily.

It localises to the cell membrane. Functionally, ABC transporter; part of the gene cluster that mediates the biosynthesis of eupenifeldin, a bistropolone meroterpenoid that acts as an antitumor agent. This Phoma sp protein is ABC transporter eupT.